We begin with the raw amino-acid sequence, 148 residues long: MANVSNCEIPENLLYFIEGKNTVWAKQEAPDVIVVGITDIAQTMAGKVVKVRLKKKGTKVERGKPVATMESGKWAGPVPAPASGEIIDVNPDVEKNPVLVNQDPYGKGWLVKMKVNNPEELKQLVTGSAAVSKLTELINSEKLQCKRL.

Residues 32 to 114 (VIVVGITDIA…YGKGWLVKMK (83 aa)) enclose the Lipoyl-binding domain. K73 is subject to N6-lipoyllysine.

It belongs to the GcvH family. As to quaternary structure, the glycine cleavage system is composed of four proteins: P, T, L and H. Requires (R)-lipoate as cofactor.

In terms of biological role, the glycine cleavage system catalyzes the degradation of glycine. The H protein shuttles the methylamine group of glycine from the P protein to the T protein. The protein is Probable glycine cleavage system H protein 2 of Sulfurisphaera tokodaii (strain DSM 16993 / JCM 10545 / NBRC 100140 / 7) (Sulfolobus tokodaii).